The primary structure comprises 169 residues: Cysteine synthase B (169 aa).

An N6-(pyridoxal phosphate)lysine modification is found at K45. Residue N75 participates in pyridoxal 5'-phosphate binding. Positions 146 to 169 (ANGDNPEAHYTSTGPEIWRQTGGT) are disordered.

It belongs to the cysteine synthase/cystathionine beta-synthase family. Pyridoxal 5'-phosphate serves as cofactor.

The enzyme catalyses O-acetyl-L-serine + hydrogen sulfide = L-cysteine + acetate. Its pathway is amino-acid biosynthesis; L-cysteine biosynthesis; L-cysteine from L-serine: step 2/2. The protein is Cysteine synthase B (cysM) of Pseudomonas syringae pv. syringae.